A 406-amino-acid chain; its full sequence is 1-deoxy-D-xylulose 5-phosphate reductoisomerase (406 aa).

Positions 21, 22, 23, 24, 47, 50, and 127 each coordinate NADPH. 1-deoxy-D-xylulose 5-phosphate is bound at residue Lys128. Glu129 lines the NADPH pocket. Asp151 lines the Mn(2+) pocket. Ser152, Glu153, Ser177, and His200 together coordinate 1-deoxy-D-xylulose 5-phosphate. Glu153 provides a ligand contact to Mn(2+). Residue Gly206 participates in NADPH binding. Residues Ser213, Asn218, Lys219, and Glu222 each coordinate 1-deoxy-D-xylulose 5-phosphate. Glu222 contributes to the Mn(2+) binding site.

This sequence belongs to the DXR family. Mg(2+) serves as cofactor. The cofactor is Mn(2+).

It catalyses the reaction 2-C-methyl-D-erythritol 4-phosphate + NADP(+) = 1-deoxy-D-xylulose 5-phosphate + NADPH + H(+). Its pathway is isoprenoid biosynthesis; isopentenyl diphosphate biosynthesis via DXP pathway; isopentenyl diphosphate from 1-deoxy-D-xylulose 5-phosphate: step 1/6. Catalyzes the NADPH-dependent rearrangement and reduction of 1-deoxy-D-xylulose-5-phosphate (DXP) to 2-C-methyl-D-erythritol 4-phosphate (MEP). The polypeptide is 1-deoxy-D-xylulose 5-phosphate reductoisomerase (Mycobacterium leprae (strain Br4923)).